The sequence spans 457 residues: Multidrug resistance protein MdtK (457 aa).

The next 12 membrane-spanning stretches (helical) occupy residues 11–31 (LLAL…MGVV), 53–73 (IWLP…PVIA), 93–113 (VLAG…GYII), 127–147 (AVNY…FQVM), 160–180 (GMAM…IFIY), 188–208 (LGGV…FFCM), 243–263 (MPVA…ALLV), 276–296 (IALN…AAVT), 316–336 (RTGI…TVVF), 357–377 (LMLL…GSGV), 387–407 (IFFI…YILG), and 418–438 (PAGF…MMMW).

This sequence belongs to the multi antimicrobial extrusion (MATE) (TC 2.A.66.1) family. MdtK subfamily.

It is found in the cell inner membrane. In terms of biological role, multidrug efflux pump that functions probably as a Na(+)/drug antiporter. This Cronobacter sakazakii (strain ATCC BAA-894) (Enterobacter sakazakii) protein is Multidrug resistance protein MdtK.